Here is a 230-residue protein sequence, read N- to C-terminus: Ion-translocating oxidoreductase complex subunit E (230 aa).

6 consecutive transmembrane segments (helical) span residues 18-38 (ALVQLLGLCPLLAVTSTATNA), 39-59 (LGLGLATTLVLTLTNLTVSAL), 63-83 (TPAEIRIPIYVMIIASVVSAV), 86-106 (LINAYAFGLYQSLGIFIPLIV), 125-145 (WLSALDGFSIGMGATGAMFVL), and 182-202 (PFLLAMLPPGAFIGLGLMLAV).

It belongs to the NqrDE/RnfAE family. As to quaternary structure, the complex is composed of six subunits: RsxA, RsxB, RsxC, RsxD, RsxE and RsxG.

It localises to the cell inner membrane. Functionally, part of a membrane-bound complex that couples electron transfer with translocation of ions across the membrane. Required to maintain the reduced state of SoxR. This Salmonella newport (strain SL254) protein is Ion-translocating oxidoreductase complex subunit E.